The following is a 398-amino-acid chain: MALQAASFLPSSFSINKEGKANVSLKETSLFGVTFSDSLRTDFSSLRTRRGCRQISQTGAIRSQAVATTPSVNRATGEGKKTLRKGSVIITGASSGLGLATAKALAETGKWHVIMACRDFLKAERAAKSAGMPKENYTIMHLDLASLDSVRQFVETFRRSERPLDVLVCNAAVYFPTAKEPTYTADGFELSVGTNHLGHFLLSRLLLDDLNKSDYPSKRLIIVGSITGNTNTLAGNVPPKANLGDLRGLAGGLNGMNSSAMIDGAEFDGAKAYKDSKVCNMLTMQEFHRRYHEETGITFASLYPGCIATTGLFREHIPLFRTLFPPFQKYITKGYVSEAESGKRLAQVVSEPSLTKSGVYWSWNKDSASFENQLSEEASDVEKARKVWEVSEKLVGLA.

Belongs to the short-chain dehydrogenases/reductases (SDR) family. POR subfamily.

The protein resides in the plastid. It localises to the chloroplast. It catalyses the reaction chlorophyllide a + NADP(+) = protochlorophyllide a + NADPH + H(+). It functions in the pathway porphyrin-containing compound metabolism; chlorophyll biosynthesis. Functionally, phototransformation of protochlorophyllide (Pchlide) to chlorophyllide (Chlide). The sequence is that of Protochlorophyllide reductase, chloroplastic (POR1) from Daucus carota (Wild carrot).